The sequence spans 689 residues: Methionine--tRNA ligase (689 aa).

Positions 13–23 (PYANGNFHIGH) match the 'HIGH' region motif. 4 residues coordinate Zn(2+): Cys-144, Cys-147, Cys-157, and Cys-160. Positions 341-345 (KMSKS) match the 'KMSKS' region motif. Lys-344 is an ATP binding site. A tRNA-binding domain is found at 583–689 (DFAKVDLRIA…PGASPGLRVR (107 aa)).

Belongs to the class-I aminoacyl-tRNA synthetase family. MetG type 1 subfamily. As to quaternary structure, homodimer. The cofactor is Zn(2+).

It localises to the cytoplasm. The enzyme catalyses tRNA(Met) + L-methionine + ATP = L-methionyl-tRNA(Met) + AMP + diphosphate. Its function is as follows. Is required not only for elongation of protein synthesis but also for the initiation of all mRNA translation through initiator tRNA(fMet) aminoacylation. The chain is Methionine--tRNA ligase from Polaromonas sp. (strain JS666 / ATCC BAA-500).